A 1023-amino-acid chain; its full sequence is StAR-related lipid transfer protein 8 (1023 aa).

Disordered regions lie at residues 46–67 (PMGSSDLLAPPSPGLPATSSCE) and 82–161 (TVSL…KVSK). Residues 99–114 (PSSSDRPLLSPTQGQE) are compositionally biased toward polar residues. Residue Ser108 is modified to Phosphoserine. Over residues 120 to 130 (AKKRHRNRSFL) the composition is skewed to basic residues. Positions 143–161 (GSQQAEPKHSPATSEKVSK) are enriched in polar residues. Asymmetric dimethylarginine is present on Arg169. 2 positions are modified to phosphoserine: Ser235 and Ser238. Positions 387 to 397 (PAQAPAEAEPV) are enriched in low complexity. Disordered stretches follow at residues 387–461 (PAQA…MNEA) and 467–486 (LAGLQASMPRERRDSGVGAS). A compositionally biased stretch (polar residues) spans 441-459 (ISDTVASSSELDSSGNSMN). Phosphoserine occurs at positions 498 and 506. The Rho-GAP domain occupies 573–777 (PPLIHVQRTG…HMISDCKKLF (205 aa)). A disordered region spans residues 733-757 (KKDSPSPRIKSKRSLIGRPGPRDLS). An START domain is found at 809–1017 (AQAAGVSLSL…RDSFPTLQAA (209 aa)).

In terms of assembly, binds both the SH2 and PTB domains of TNS1. As to expression, widely expressed with highest levels in kidney, lung and placenta.

The protein localises to the cell junction. It localises to the focal adhesion. Its function is as follows. Accelerates GTPase activity of RHOA and CDC42, but not RAC1. Stimulates the hydrolysis of phosphatidylinositol 4,5-bisphosphate by PLCD1. The chain is StAR-related lipid transfer protein 8 (STARD8) from Homo sapiens (Human).